Reading from the N-terminus, the 448-residue chain is Solute carrier family 52, riboflavin transporter, member 1 (448 aa).

5 helical membrane passes run 14 to 34, 47 to 67, 79 to 99, 124 to 144, and 147 to 167; these read LLVALFGMGSWAAVNGIWVEL, LPSYLSVVVALGNLGLLVVTL, VPIQVVQVLSVVGTALLAPLW, ACCTSNVTFLPFLSHLPPPFL, and FFLGQGLSALLPCVLALVQGV. Asparagine 178 carries an N-linked (GlcNAc...) asparagine glycan. A helical transmembrane segment spans residues 191-211; that stretch reads FPASTFFWALTALLVTSAAAF. The interval 225 to 267 is disordered; the sequence is TTGGSGPELQLGSPGAEEEEKEEEEALPLQEPPSQAAGTIPGP. Positions 240–250 are enriched in acidic residues; it reads AEEEEKEEEEA. 5 helical membrane-spanning segments follow: residues 280–300, 315–335, 342–362, 369–389, and 407–427; these read AFLLGLMAFTSAVTNGVLPSV, LAVVLGSAANPLACFLAMGVL, LVGLSLLGMLFGAYLMALAIL, VGTTAGVVLVVLSWVLCLCVF, and ALLAAGVAIQVGSLLGAGAMF.

It belongs to the riboflavin transporter family. In terms of tissue distribution, widely expressed. Highly expressed in the testis, placenta and small intestine. Expressed at lower level in other tissues.

The protein localises to the cell membrane. The catalysed reaction is riboflavin(in) = riboflavin(out). Its activity is regulated as follows. The activity is strongly inhibited by riboflavin analogs, such as lumiflavin. Weakly inhibited by flavin adenine dinucleotide (FAD). Plasma membrane transporter mediating the uptake by cells of the water soluble vitamin B2/riboflavin that plays a key role in biochemical oxidation-reduction reactions of the carbohydrate, lipid, and amino acid metabolism. Humans are unable to synthesize vitamin B2/riboflavin and must obtain it via intestinal absorption. In terms of biological role, (Microbial infection) May function as a cell receptor to retroviral envelopes similar to the porcine endogenous retrovirus (PERV-A). The protein is Solute carrier family 52, riboflavin transporter, member 1 of Homo sapiens (Human).